Here is a 1545-residue protein sequence, read N- to C-terminus: ATP-binding cassette sub-family C member 2 (1545 aa).

Topologically, residues 1 to 27 (MLEKFCNSTFWNSSFLDSPEADLPLCF) are extracellular. N-linked (GlcNAc...) asparagine glycosylation is found at asparagine 7 and asparagine 12. The helical transmembrane segment at 28-48 (EQTVLVWIPLGYLWLLAPWQL) threads the bilayer. Over 49–68 (LHVYKSRTKRSSTTKLYLAK) the chain is Cytoplasmic. A helical membrane pass occupies residues 69-89 (QVFVGFLLILAAIELALVLTE). Topologically, residues 90 to 93 (DSGQ) are extracellular. Residues 94 to 114 (ATVPAVRYTNPSLYLGTWLLV) traverse the membrane as a helical segment. At 115–126 (LLIQYSRQWCVQ) the chain is on the cytoplasmic side. Residues 127–147 (KNSWFLSLFWILSILCGTFQF) form a helical membrane-spanning segment. Topologically, residues 148–165 (QTLIRTLLQGDNSNLAYS) are extracellular. Residues 166–186 (CLFFISYGFQILILIFSAFSE) form a helical membrane-spanning segment. Over 187–313 (NNESSNNPSS…DVPKSWLMKA (127 aa)) the chain is Cytoplasmic. The interval 253-284 (ARRALQRRQEKSSQQNSGARLPGLNKNQSQSQ) is disordered. A phosphoserine mark is found at serine 281 and serine 283. The helical transmembrane segment at 314-334 (LFKTFYMVLLKSFLLKLVNDI) threads the bilayer. The region spanning 322–605 (LLKSFLLKLV…LPMMISSMLQ (284 aa)) is the ABC transmembrane type-1 1 domain. The Extracellular portion of the chain corresponds to 335–360 (FTFVSPQLLKLLISFASDRDTYLWIG). Residues 361–381 (YLCAILLFTAALIQSFCLQCY) traverse the membrane as a helical segment. Topologically, residues 382 to 437 (FQLCFKLGVKVRTAIMASVYKKALTLSNLARKEYTVGETVNLMSVDAQKLMDVTNF) are cytoplasmic. Residues 438–458 (MHMLWSSVLQIVLSIFFLWRE) traverse the membrane as a helical segment. Over 459–461 (LGP) the chain is Extracellular. A helical transmembrane segment spans residues 462–482 (SVLAGVGVMVLVIPINAILST). Topologically, residues 483-544 (KSKTIQVKNM…NLLAFSQLQC (62 aa)) are cytoplasmic. The helical transmembrane segment at 545 to 565 (VVIFVFQLTPVLVSVVTFSVY) threads the bilayer. The Extracellular portion of the chain corresponds to 566 to 587 (VLVDSNNILDAQKAFTSITLFN). The chain crosses the membrane as a helical span at residues 588 to 608 (ILRFPLSMLPMMISSMLQASV). The Cytoplasmic portion of the chain corresponds to 609–971 (STERLEKYLG…VKFSIYLEYL (363 aa)). In terms of domain architecture, ABC transporter 1 spans 637–861 (MQFSEASFTW…KGEFAKNLKT (225 aa)). 671 to 678 (GPVGSGKS) is a binding site for ATP. Serine 878, serine 926, serine 930, and serine 938 each carry phosphoserine. The helical transmembrane segment at 972–992 (QAIGLFSIFFIILAFVMNSVA) threads the bilayer. Residues 979 to 1264 (IFFIILAFVM…LVRMTSEIET (286 aa)) enclose the ABC transmembrane type-1 2 domain. Over 993-1033 (FIGSNLWLSAWTSDSKIFNSTDYPASQRDMRVGVYGALGLA) the chain is Extracellular. Asparagine 1011 carries N-linked (GlcNAc...) asparagine glycosylation. Residues 1034–1054 (QGIFVFIAHFWSAFGFVHASN) traverse the membrane as a helical segment. Residues 1055 to 1097 (ILHKQLLNNILRAPMRFFDTTPTGRIVNRFAGDISTVDDTLPQ) are Cytoplasmic-facing. The helical transmembrane segment at 1098-1118 (SLRSWITCFLGIISTLVMICM) threads the bilayer. Alanine 1119 is a topological domain (extracellular). A helical transmembrane segment spans residues 1120-1140 (TPVFTIIVIPLGIIYVSVQMF). The Cytoplasmic portion of the chain corresponds to 1141–1211 (YVSTSRQLRR…TSNRWLAIRL (71 aa)). The chain crosses the membrane as a helical span at residues 1212–1232 (ELVGNLTVFFSALMMVIYRDT). Topologically, residues 1233–1234 (LS) are extracellular. Residues 1235–1255 (GDTVGFVLSNALNITQTLNWL) traverse the membrane as a helical segment. At 1256 to 1545 (VRMTSEIETN…GIENVNSTKF (290 aa)) the chain is on the cytoplasmic side. The ABC transporter 2 domain occupies 1300–1534 (IQFNNYQVRY…PGPFYFMAKE (235 aa)). Position 1334-1341 (1334-1341 (GRTGAGKS)) interacts with ATP. Phosphoserine is present on serine 1438.

It belongs to the ABC transporter superfamily. ABCC family. Conjugate transporter (TC 3.A.1.208) subfamily. In terms of tissue distribution, expressed by polarized cells in liver, kidney and intestine. The highest expression is found in liver. Expressed in small intestine.

Its subcellular location is the apical cell membrane. The enzyme catalyses ATP + H2O + xenobioticSide 1 = ADP + phosphate + xenobioticSide 2.. It catalyses the reaction an S-substituted glutathione(in) + ATP + H2O = an S-substituted glutathione(out) + ADP + phosphate + H(+). The catalysed reaction is taurolithocholate 3-sulfate(in) + ATP + H2O = taurolithocholate 3-sulfate(out) + ADP + phosphate + H(+). It carries out the reaction leukotriene C4(in) + ATP + H2O = leukotriene C4(out) + ADP + phosphate + H(+). The enzyme catalyses 17beta-estradiol 17-O-(beta-D-glucuronate)(in) + ATP + H2O = 17beta-estradiol 17-O-(beta-D-glucuronate)(out) + ADP + phosphate + H(+). It catalyses the reaction (4Z,15Z)-bilirubin IXalpha C8-beta-D-glucuronoside(in) + ATP + H2O = (4Z,15Z)-bilirubin IXalpha C8-beta-D-glucuronoside(out) + ADP + phosphate + H(+). The catalysed reaction is (4Z,15Z)-bilirubin IXalpha C8,C12-beta-D-bisglucuronoside(in) + ATP + H2O = (4Z,15Z)-bilirubin IXalpha C8,C12-beta-D-bisglucuronoside(out) + ADP + phosphate + H(+). In terms of biological role, ATP-dependent transporter of the ATP-binding cassette (ABC) family that binds and hydrolyzes ATP to enable active transport of various substrates including many drugs, toxicants and endogenous compound across cell membranes. Transports a wide variety of conjugated organic anions such as sulfate-, glucuronide- and glutathione (GSH)-conjugates of endo- and xenobiotics substrates. Mediates hepatobiliary excretion of mono- and bis-glucuronidated bilirubin molecules and therefore play an important role in bilirubin detoxification. Also mediates hepatobiliary excretion of others glucuronide conjugates such as 17beta-estradiol 17-glucosiduronic acid and leukotriene C4. Transports sulfated bile salt such as taurolithocholate sulfate. Transports various anticancer drugs, such as anthracycline, vinca alkaloid and methotrexate and HIV-drugs such as protease inhibitors. Confers resistance to several anti-cancer drugs including cisplatin, doxorubicin, epirubicin, methotrexate, etoposide and vincristine. This chain is ATP-binding cassette sub-family C member 2, found in Homo sapiens (Human).